An 89-amino-acid polypeptide reads, in one-letter code: Prostaglandin E2 receptor EP3 subtype (89 aa).

A helical transmembrane segment spans residues 1–18; that stretch reads GVWLAVLAFALLPVLGVG. Residues 19-48 lie on the Extracellular side of the membrane; it reads QYTIQWPGTWCFISTGPGGNGTNSRQNWGN. A glycan (N-linked (GlcNAc...) asparagine) is linked at Asn-38. Residues 49–74 traverse the membrane as a helical segment; the sequence is VFFASDFAILGLSALVVTFACNLATI. Topologically, residues 75–89 are cytoplasmic; sequence KALVSRCRAKATASQ.

The protein belongs to the G-protein coupled receptor 1 family. In terms of assembly, interacts (via C-terminus) with MKLN1.

It is found in the cell membrane. Functionally, receptor for prostaglandin E2 (PGE2). Required for normal development of fever in response to pyrinogens, including IL1B, prostaglandin E2 and bacterial lipopolysaccharide (LPS). Required for normal potentiation of platelet aggregation by prostaglandin E2, and thus plays a role in the regulation of blood coagulation. Required for increased HCO3(-) secretion in the duodenum in response to mucosal acidification, and thereby contributes to the protection of the mucosa against acid-induced ulceration. Not required for normal kidney function, normal urine volume and osmolality. This chain is Prostaglandin E2 receptor EP3 subtype (PTGER3), found in Ovis aries (Sheep).